The sequence spans 79 residues: Major outer membrane lipoprotein Lpp 3 (79 aa).

The first 21 residues, 1–21, serve as a signal peptide directing secretion; the sequence is MNRTNKLILGAVVLGSALLAG. Cys22 carries N-palmitoyl cysteine lipidation. The S-diacylglycerol cysteine moiety is linked to residue Cys22. 2 repeats span residues 25–35 and 39–49; these read NAKIDQLSSDV and SAKVDQLSNDV. The stretch at 28–76 forms a coiled coil; sequence IDQLSSDVQTLSAKVDQLSNDVNAMRSDVQAAKDDAARANQRLDNKVLR. The residue at position 79 (Lys79) is an N6-murein peptidoglycan lysine.

It belongs to the Lpp family. Homotrimer.

The protein resides in the cell outer membrane. The protein localises to the secreted. It is found in the cell wall. Functionally, a highly abundant outer membrane lipoprotein that controls the distance between the inner and outer membranes. The only protein known to be covalently linked to the peptidoglycan network (PGN). Also non-covalently binds the PGN. The link between the cell outer membrane and PGN contributes to maintenance of the structural and functional integrity of the cell envelope, and maintains the correct distance between the PGN and the outer membrane. The chain is Major outer membrane lipoprotein Lpp 3 from Salmonella paratyphi A (strain ATCC 9150 / SARB42).